A 126-amino-acid polypeptide reads, in one-letter code: Thiocyanate hydrolase subunit alpha (126 aa).

Heterododecamer consisting of 4 alpha, 4 beta, and 4 gamma subunits.

The catalysed reaction is thiocyanate + H2O + 2 H(+) = carbonyl sulfide + NH4(+). Its pathway is organosulfur degradation; thiocyanate degradation. Involved in the degradation of thiocyanate. The polypeptide is Thiocyanate hydrolase subunit alpha (scnA) (Thiobacillus thioparus).